The chain runs to 261 residues: Precorrin-6A reductase (261 aa).

Belongs to the precorrin-6x reductase family.

The catalysed reaction is precorrin-6B + NADP(+) = precorrin-6A + NADPH + 2 H(+). Its pathway is cofactor biosynthesis; adenosylcobalamin biosynthesis; cob(II)yrinate a,c-diamide from precorrin-2 (aerobic route): step 6/10. Its function is as follows. Catalyzes the reduction of the macrocycle of precorrin-6X into precorrin-6Y. This Sinorhizobium sp protein is Precorrin-6A reductase (cobK).